Reading from the N-terminus, the 327-residue chain is Lipid phosphate phosphatase 1 (327 aa).

A run of 6 helical transmembrane segments spans residues 51 to 71, 93 to 113, 118 to 138, 187 to 207, 217 to 237, and 244 to 264; these read WIIL…SPFY, IWSV…CFYL, VYDL…TGVI, FPSG…LYLS, GHVA…LVGI, and WHHW…AAFC.

Belongs to the PA-phosphatase related phosphoesterase family. Strongly expressed in leaves, moderately in roots, weakly in floral hamps and flower buds, and not detected in adult flowers and seedpods.

Its subcellular location is the membrane. With respect to regulation, PA phosphatase activity inhibited by N-ethylmaleimide with an IC(50) value of 10 mM. Its function is as follows. Plays a general role in cellular responses to stress, may be by attenuating the signal produced by phospholipases. Exhibits both diacylglycerol pyrophosphate (DGPP) phosphatase and phosphatidate (PA) phosphatase activities. Substrate preference is diacylglycerol pyrophosphate &gt; phosphatidate. In Arabidopsis thaliana (Mouse-ear cress), this protein is Lipid phosphate phosphatase 1 (LPP1).